The primary structure comprises 205 residues: Small ribosomal subunit protein uS4 (205 aa).

An S4 RNA-binding domain is found at 95 to 158 (SRLDNIVYRM…TKSPLVKNFI (64 aa)).

This sequence belongs to the universal ribosomal protein uS4 family. As to quaternary structure, part of the 30S ribosomal subunit. Contacts protein S5. The interaction surface between S4 and S5 is involved in control of translational fidelity.

Its function is as follows. One of the primary rRNA binding proteins, it binds directly to 16S rRNA where it nucleates assembly of the body of the 30S subunit. With S5 and S12 plays an important role in translational accuracy. The sequence is that of Small ribosomal subunit protein uS4 from Mycoplasma genitalium (strain ATCC 33530 / DSM 19775 / NCTC 10195 / G37) (Mycoplasmoides genitalium).